Reading from the N-terminus, the 152-residue chain is Large-conductance mechanosensitive channel (152 aa).

2 helical membrane passes run 14 to 34 and 81 to 101; these read VIDL…VTSL and GLFL…FIAI.

It belongs to the MscL family. As to quaternary structure, homopentamer.

It is found in the cell membrane. Its function is as follows. Channel that opens in response to stretch forces in the membrane lipid bilayer. May participate in the regulation of osmotic pressure changes within the cell. The polypeptide is Large-conductance mechanosensitive channel (Clostridium perfringens (strain 13 / Type A)).